The sequence spans 82 residues: Toxin GTx1-15 (82 aa).

Positions 1 to 21 are cleaved as a signal peptide; that stretch reads MKTSVVFVIAGLALLSVACYA. The propeptide occupies 22–46; it reads SELKEQSSINEVLSTIFHFEQPEER. 3 disulfide bridges follow: C48/C63, C55/C69, and C62/C76. F80 carries the phenylalanine amide modification.

This sequence belongs to the neurotoxin 10 (Hwtx-1) family. 08 (Gtx1-15) subfamily. In terms of tissue distribution, expressed by the venom gland.

The protein localises to the secreted. Potent voltage-gated sodium channel blocker. Potently inhibits the voltage-gated sodium channels Nav1.7/SCN9A (IC(50)=0.58-10 nM). Shows a moderate activity on Nav1.1/SCN1A (IC(50)=6 nM), Nav1.2/SCN2A (IC(50)=5-128 nM), Nav1.3/SCN3A (IC(50)=20.3-170 nM), and Nav1.6/SCN8A (IC(50)=17-20.1 nM). Shows an unclear inhibition of Nav1.4/SCN4A (IC(50)=200 nM to &gt;10 uM), Nav1.5/SCN5A (IC(50)=140 nM to &gt;10 uM) and Nav1.8/SCN10A (IC(50)=68-12200 nM). Weakly blocks the low voltage-gated calcium channels Cav3.1/CACNA1G (30% inhibition of the peak current by 9.8 nM of the toxin). It shows moderate affinity for lipid bilayers. This is Toxin GTx1-15 from Grammostola rosea (Chilean rose tarantula).